Here is a 783-residue protein sequence, read N- to C-terminus: FYN-binding protein 1 (783 aa).

2 stretches are compositionally biased toward polar residues: residues 1 to 18 (MAKYNTGGNPTEDVSVNS) and 25 to 45 (GPNSSSGIQARKNLFNNQGNA). Residues 1–502 (MAKYNTGGNP…KEKKEQEIKK (502 aa)) form a disordered region. N6-acetyllysine is present on K3. Phosphoserine occurs at positions 28 and 46. Residues 69-79 (SSEEKPDKEPK) show a composition bias toward basic and acidic residues. S225 carries the phosphoserine modification. Basic and acidic residues-rich tracts occupy residues 240-252 (PAREDSENKDHAG) and 278-290 (NGEEKKEDRKIDA). S329 bears the Phosphoserine mark. Over residues 345–363 (KPLPPLFTLGPPPPKPNRP) the composition is skewed to pro residues. Positions 348-448 (PPLFTLGPPP…QDGVTHSDGA (101 aa)) are interaction with SKAP1. Polar residues predominate over residues 374–387 (TSSGNSTSKGQTSY). The span at 392 to 424 (LPPPPPSHPASQPPLPASHPSQPPVPSLPPRNI) shows a compositional bias: pro residues. Acidic residues predominate over residues 451-465 (LDEEQDSEGETYEDI). Positions 456 to 507 (DSEGETYEDIEASKEREKKREKEEKKRLELEKKEQKEKEKKEQEIKKKFKLT) form a coiled coil. Position 457 is a phosphoserine (S457). An SH2-binding motif is present at residues 462 to 465 (YEDI). Over residues 466-501 (EASKEREKKREKEEKKRLELEKKEQKEKEKKEQEIK) the composition is skewed to basic and acidic residues. A Nuclear localization signal motif is present at residues 469-505 (KEREKKREKEEKKRLELEKKEQKEKEKKEQEIKKKFK). An SH3 1 domain is found at 511–572 (QVIHLAKACC…KTTAVEIDYD (62 aa)). At Y571 the chain carries Phosphotyrosine. 2 positions are modified to phosphoserine: S573 and S580. Positions 595-598 (YDDV) match the SH2-binding; to LCP2 motif. Positions 598–678 (VAEQDDISSH…GTNVGKAKTE (81 aa)) are disordered. Acidic residues-rich tracts occupy residues 620 to 635 (PDDDIYDGIEEEDADD) and 646 to 656 (MGDEVYDDVDT). Positions 625–628 (YDGI) match the SH2-binding; to FYN motif. The residue at position 651 (Y651) is a Phosphotyrosine. A Nuclear localization signal motif is present at residues 674–700 (KAKTEEKDLKKLKKQEKEEKDFRKKFK). The SH3 2 domain maps to 700–768 (KYDGEIRVLY…LRSYLADNDG (69 aa)).

Part of a complex consisting of SKAP2, FYB1 and PTPNS1. Part of a complex consisting of SKAP2, FYB1 and LILRB3. Part of a complex consisting of SKAP1, FYB1 and CLNK. Interacts with CLNK (via its SH2 domain); this interaction allows SKAP1 and FYB1 to recruit FYN to the complex, thus promoting the phosphorylation of CLNK by FYN. Interacts with FYN. Interacts with LCP2. Interacts with SKAP1. Interacts with SKAP2. Interacts with FASLG. Interacts with EVL. Interacts with TMEM47. Interacts with LCK. Post-translationally, T-cell receptor ligation leads to increased tyrosine phosphorylation. Expressed in hematopoietic tissues such as myeloid and T-cells, spleen and thymus. Not expressed in B-cells, nor in non-lymphoid tissues.

It localises to the cytoplasm. It is found in the nucleus. The protein resides in the cell junction. Functionally, acts as an adapter protein of the FYN and LCP2 signaling cascades in T-cells. May play a role in linking T-cell signaling to remodeling of the actin cytoskeleton. Modulates the expression of IL2. Involved in platelet activation. Prevents the degradation of SKAP1 and SKAP2. May be involved in high affinity immunoglobulin epsilon receptor signaling in mast cells. The protein is FYN-binding protein 1 of Homo sapiens (Human).